A 66-amino-acid chain; its full sequence is DNA-directed RNA polymerase subunit Rpo10 (66 aa).

Cys-7, Cys-10, Cys-44, and Cys-45 together coordinate Zn(2+).

Belongs to the archaeal Rpo10/eukaryotic RPB10 RNA polymerase subunit family. In terms of assembly, part of the 13-subunit RNA polymerase complex. It depends on Zn(2+) as a cofactor.

It localises to the cytoplasm. The catalysed reaction is RNA(n) + a ribonucleoside 5'-triphosphate = RNA(n+1) + diphosphate. Functionally, DNA-dependent RNA polymerase (RNAP) catalyzes the transcription of DNA into RNA using the four ribonucleoside triphosphates as substrates. The sequence is that of DNA-directed RNA polymerase subunit Rpo10 from Sulfolobus acidocaldarius (strain ATCC 33909 / DSM 639 / JCM 8929 / NBRC 15157 / NCIMB 11770).